A 193-amino-acid polypeptide reads, in one-letter code: Adenine phosphoribosyltransferase (193 aa).

Belongs to the purine/pyrimidine phosphoribosyltransferase family. Homodimer.

The protein resides in the cytoplasm. It catalyses the reaction AMP + diphosphate = 5-phospho-alpha-D-ribose 1-diphosphate + adenine. The protein operates within purine metabolism; AMP biosynthesis via salvage pathway; AMP from adenine: step 1/1. In terms of biological role, catalyzes a salvage reaction resulting in the formation of AMP, that is energically less costly than de novo synthesis. The sequence is that of Adenine phosphoribosyltransferase from Chromobacterium violaceum (strain ATCC 12472 / DSM 30191 / JCM 1249 / CCUG 213 / NBRC 12614 / NCIMB 9131 / NCTC 9757 / MK).